Consider the following 395-residue polypeptide: Transcription termination/antitermination protein NusA (395 aa).

Positions 137 to 201 (NSVLMGQVIL…TKKGLLLELS (65 aa)) constitute an S1 motif domain. KH domains lie at 243-291 (SHNS…TLAL) and 331-378 (KVRL…NENE).

This sequence belongs to the NusA family. In terms of assembly, monomer. Binds directly to the core enzyme of the DNA-dependent RNA polymerase and to nascent RNA.

The protein localises to the cytoplasm. Participates in both transcription termination and antitermination. The sequence is that of Transcription termination/antitermination protein NusA from Helicobacter pylori (strain J99 / ATCC 700824) (Campylobacter pylori J99).